The primary structure comprises 443 residues: Trigger factor (443 aa).

A PPIase FKBP-type domain is found at 165-250 (GDQVVMDFVG…IKEVKEPVAA (86 aa)).

It belongs to the FKBP-type PPIase family. Tig subfamily.

Its subcellular location is the cytoplasm. The enzyme catalyses [protein]-peptidylproline (omega=180) = [protein]-peptidylproline (omega=0). Its function is as follows. Involved in protein export. Acts as a chaperone by maintaining the newly synthesized protein in an open conformation. Functions as a peptidyl-prolyl cis-trans isomerase. The chain is Trigger factor from Ruegeria pomeroyi (strain ATCC 700808 / DSM 15171 / DSS-3) (Silicibacter pomeroyi).